Reading from the N-terminus, the 295-residue chain is Pantothenate synthetase (295 aa).

29-36 lines the ATP pocket; that stretch reads MGALHSGH. His-36 (proton donor) is an active-site residue. Residue Gln-60 participates in (R)-pantoate binding. Position 60 (Gln-60) interacts with beta-alanine. An ATP-binding site is contributed by 158–161; that stretch reads GQKD. Gln-164 serves as a coordination point for (R)-pantoate. Residues Val-187 and 195–198 each bind ATP; that span reads LSSR.

It belongs to the pantothenate synthetase family. As to quaternary structure, homodimer.

It is found in the cytoplasm. The catalysed reaction is (R)-pantoate + beta-alanine + ATP = (R)-pantothenate + AMP + diphosphate + H(+). It functions in the pathway cofactor biosynthesis; (R)-pantothenate biosynthesis; (R)-pantothenate from (R)-pantoate and beta-alanine: step 1/1. In terms of biological role, catalyzes the condensation of pantoate with beta-alanine in an ATP-dependent reaction via a pantoyl-adenylate intermediate. This chain is Pantothenate synthetase, found in Paenarthrobacter aurescens (strain TC1).